A 95-amino-acid polypeptide reads, in one-letter code: Aspartyl/glutamyl-tRNA(Asn/Gln) amidotransferase subunit C (95 aa).

Belongs to the GatC family. As to quaternary structure, heterotrimer of A, B and C subunits.

It carries out the reaction L-glutamyl-tRNA(Gln) + L-glutamine + ATP + H2O = L-glutaminyl-tRNA(Gln) + L-glutamate + ADP + phosphate + H(+). It catalyses the reaction L-aspartyl-tRNA(Asn) + L-glutamine + ATP + H2O = L-asparaginyl-tRNA(Asn) + L-glutamate + ADP + phosphate + 2 H(+). In terms of biological role, allows the formation of correctly charged Asn-tRNA(Asn) or Gln-tRNA(Gln) through the transamidation of misacylated Asp-tRNA(Asn) or Glu-tRNA(Gln) in organisms which lack either or both of asparaginyl-tRNA or glutaminyl-tRNA synthetases. The reaction takes place in the presence of glutamine and ATP through an activated phospho-Asp-tRNA(Asn) or phospho-Glu-tRNA(Gln). In Rhodopseudomonas palustris (strain BisA53), this protein is Aspartyl/glutamyl-tRNA(Asn/Gln) amidotransferase subunit C.